The sequence spans 171 residues: Sec-independent protein translocase protein TatB (171 aa).

A helical membrane pass occupies residues 1-21 (MFDIGFSELLLVFIIGLVVLG). The interval 89–171 (AESMKRSYVA…APSPSSSDKP (83 aa)) is disordered. Basic and acidic residues predominate over residues 100–123 (DPEKASDEAHTIHNPVVKDNETAH). Over residues 130–139 (AAQTQASSPE) the composition is skewed to polar residues.

It belongs to the TatB family. In terms of assembly, the Tat system comprises two distinct complexes: a TatABC complex, containing multiple copies of TatA, TatB and TatC subunits, and a separate TatA complex, containing only TatA subunits. Substrates initially bind to the TatABC complex, which probably triggers association of the separate TatA complex to form the active translocon.

It localises to the cell inner membrane. In terms of biological role, part of the twin-arginine translocation (Tat) system that transports large folded proteins containing a characteristic twin-arginine motif in their signal peptide across membranes. Together with TatC, TatB is part of a receptor directly interacting with Tat signal peptides. TatB may form an oligomeric binding site that transiently accommodates folded Tat precursor proteins before their translocation. The sequence is that of Sec-independent protein translocase protein TatB from Escherichia coli O1:K1 / APEC.